The chain runs to 259 residues: Global transcriptional regulator CodY (259 aa).

Positions 1–155 are GAF domain; it reads MALLQKTRII…GATVVGMEIL (155 aa). The H-T-H motif DNA-binding region spans 203–222; that stretch reads ASKIADRVGITRSVIVNALR. Ser215 carries the post-translational modification Phosphoserine.

This sequence belongs to the CodY family.

It localises to the cytoplasm. Functionally, DNA-binding global transcriptional regulator which is involved in the adaptive response to starvation and acts by directly or indirectly controlling the expression of numerous genes in response to nutrient availability. During rapid exponential growth, CodY is highly active and represses genes whose products allow adaptation to nutrient depletion. The polypeptide is Global transcriptional regulator CodY (Bacillus pumilus (strain SAFR-032)).